We begin with the raw amino-acid sequence, 280 residues long: Putative pyruvate, phosphate dikinase regulatory protein (280 aa).

Glycine 153–threonine 160 is an ADP binding site.

Belongs to the pyruvate, phosphate/water dikinase regulatory protein family. PDRP subfamily.

It catalyses the reaction N(tele)-phospho-L-histidyl/L-threonyl-[pyruvate, phosphate dikinase] + ADP = N(tele)-phospho-L-histidyl/O-phospho-L-threonyl-[pyruvate, phosphate dikinase] + AMP + H(+). It carries out the reaction N(tele)-phospho-L-histidyl/O-phospho-L-threonyl-[pyruvate, phosphate dikinase] + phosphate + H(+) = N(tele)-phospho-L-histidyl/L-threonyl-[pyruvate, phosphate dikinase] + diphosphate. In terms of biological role, bifunctional serine/threonine kinase and phosphorylase involved in the regulation of the pyruvate, phosphate dikinase (PPDK) by catalyzing its phosphorylation/dephosphorylation. The protein is Putative pyruvate, phosphate dikinase regulatory protein of Bartonella quintana (strain Toulouse) (Rochalimaea quintana).